The following is a 115-amino-acid chain: Phosphoribosyl-ATP pyrophosphatase (115 aa).

Belongs to the PRA-PH family.

Its subcellular location is the cytoplasm. The catalysed reaction is 1-(5-phospho-beta-D-ribosyl)-ATP + H2O = 1-(5-phospho-beta-D-ribosyl)-5'-AMP + diphosphate + H(+). It functions in the pathway amino-acid biosynthesis; L-histidine biosynthesis; L-histidine from 5-phospho-alpha-D-ribose 1-diphosphate: step 2/9. This Bordetella bronchiseptica (strain ATCC BAA-588 / NCTC 13252 / RB50) (Alcaligenes bronchisepticus) protein is Phosphoribosyl-ATP pyrophosphatase.